Reading from the N-terminus, the 97-residue chain is Small ribosomal subunit protein bS20 (97 aa).

This sequence belongs to the bacterial ribosomal protein bS20 family.

In terms of biological role, binds directly to 16S ribosomal RNA. This Prochlorococcus marinus subsp. pastoris (strain CCMP1986 / NIES-2087 / MED4) protein is Small ribosomal subunit protein bS20.